The following is a 456-amino-acid chain: Probable glycine dehydrogenase (decarboxylating) subunit 1 (456 aa).

This sequence belongs to the GcvP family. N-terminal subunit subfamily. As to quaternary structure, the glycine cleavage system is composed of four proteins: P, T, L and H. In this organism, the P 'protein' is a heterodimer of two subunits.

The catalysed reaction is N(6)-[(R)-lipoyl]-L-lysyl-[glycine-cleavage complex H protein] + glycine + H(+) = N(6)-[(R)-S(8)-aminomethyldihydrolipoyl]-L-lysyl-[glycine-cleavage complex H protein] + CO2. Its function is as follows. The glycine cleavage system catalyzes the degradation of glycine. The P protein binds the alpha-amino group of glycine through its pyridoxal phosphate cofactor; CO(2) is released and the remaining methylamine moiety is then transferred to the lipoamide cofactor of the H protein. The polypeptide is Probable glycine dehydrogenase (decarboxylating) subunit 1 (Legionella pneumophila (strain Paris)).